The sequence spans 217 residues: Zinc finger CCHC-type and RNA-binding motif-containing protein 1 (217 aa).

The region spanning 10 to 88 (STVYVSNLPF…RVIKASIAID (79 aa)) is the RRM domain. Residues 105–122 (SKCYECGESGHLSYACPK) form a CCHC-type zinc finger. The interval 120 to 217 (CPKNMLGERE…YFSDEEELSD (98 aa)) is disordered. The span at 145 to 163 (PEEEIEEVEVSEEEGEDPA) shows a compositional bias: acidic residues. Residues Ser-155, Ser-210, and Ser-216 each carry the phosphoserine modification.

In terms of assembly, component of the U11/U12 snRNPs that are part of the U12-type spliceosome. Interacts with ZRSR1.

It is found in the nucleus. The protein localises to the nucleoplasm. The sequence is that of Zinc finger CCHC-type and RNA-binding motif-containing protein 1 (Zcrb1) from Rattus norvegicus (Rat).